We begin with the raw amino-acid sequence, 441 residues long: Putative serine/threonine-protein kinase F31E3.2 (441 aa).

Positions 1-16 (MGNVATRKRPGCHHHI) are enriched in basic residues. Residues 1–41 (MGNVATRKRPGCHHHIGRNEENLDDDEDGPAKKRLRIGEPQ) form a disordered region. The 256-residue stretch at 126-381 (FVLERQLGRG…FTVLHAHPFF (256 aa)) folds into the Protein kinase domain. ATP-binding positions include 132–140 (LGRGSFGVV) and Lys-156. The active-site Proton acceptor is Asp-253.

Belongs to the protein kinase superfamily. Ser/Thr protein kinase family.

The enzyme catalyses L-seryl-[protein] + ATP = O-phospho-L-seryl-[protein] + ADP + H(+). The catalysed reaction is L-threonyl-[protein] + ATP = O-phospho-L-threonyl-[protein] + ADP + H(+). The sequence is that of Putative serine/threonine-protein kinase F31E3.2 from Caenorhabditis elegans.